We begin with the raw amino-acid sequence, 606 residues long: NADH-ubiquinone oxidoreductase chain 5 (606 aa).

The next 16 membrane-spanning stretches (helical) occupy residues 1–21, 43–63, 88–108, 117–137, 140–160, 171–191, 209–229, 241–261, 273–293, 310–330, 366–386, 413–433, 457–477, 488–508, 513–533, and 582–602; these read MNLFTPLMLTAMFILLLPIIM, AFIISMIPTMMFISSGQEAII, IFIPVALFVTWSIMEFSMWYM, FFKYLLMFLITMMILVTANNL, LFIGWEGVGIMSFLLIGWWYG, AILYNRIGDVGFIMAMAWFLT, LNIPLLGLLLAATGKSAQFGL, TPVSALLHSSTMVVAGVFLLI, MQTLTLCLGAITTLFTAICAL, LGLMIVTIGINQPYLAFLHIC, MPFTTTSLIIGSLALTGMPFL, LIATSLTAAYSTRIMFFVLLG, LLIGSIFAGYLISYNIPPTTI, LTALAVTIAGFILALELNLAA, FMYPSNLFKFSNLLGYFPIVM, and GLVKLYFLSFMITLALSLILL.

The protein belongs to the complex I subunit 5 family. Core subunit of respiratory chain NADH dehydrogenase (Complex I) which is composed of 45 different subunits.

It localises to the mitochondrion inner membrane. It carries out the reaction a ubiquinone + NADH + 5 H(+)(in) = a ubiquinol + NAD(+) + 4 H(+)(out). Its function is as follows. Core subunit of the mitochondrial membrane respiratory chain NADH dehydrogenase (Complex I) which catalyzes electron transfer from NADH through the respiratory chain, using ubiquinone as an electron acceptor. Essential for the catalytic activity and assembly of complex I. In Felis catus (Cat), this protein is NADH-ubiquinone oxidoreductase chain 5 (MT-ND5).